The following is a 287-amino-acid chain: Isopentenyl-diphosphate Delta-isomerase 1, chloroplastic (287 aa).

The N-terminal 51 residues, 1–51 (MTLLLNTTAKLYIAPRTLPFTSSSTFARSPFLRIPSLLKPLSPLTARVSLS), are a transit peptide targeting the chloroplast. Residue lysine 90 coordinates substrate. Residues histidine 94 and histidine 106 each coordinate Mg(2+). Residues 104–256 (LLHRAFSVFL…GLKLSPWFRL (153 aa)) form the Nudix hydrolase domain. Residues arginine 125 and lysine 129 each coordinate substrate. Cysteine 141 is a catalytic residue. Serine 142 provides a ligand contact to substrate. The Nudix box motif lies at 142 to 172 (SHPLYRESELIDEESLGARNAAQRKLLDELG). Positions 201 and 203 each coordinate Mg(2+). Glutamate 203 is a catalytic residue.

The protein belongs to the IPP isomerase type 1 family. In terms of assembly, monomer. Mg(2+) is required as a cofactor. Mainly expressed in roots and trichomes and, to a lower extent, in leaves, flowers and stems.

It localises to the plastid. The protein resides in the chloroplast. It carries out the reaction isopentenyl diphosphate = dimethylallyl diphosphate. It functions in the pathway isoprenoid biosynthesis; dimethylallyl diphosphate biosynthesis; dimethylallyl diphosphate from isopentenyl diphosphate: step 1/1. The protein operates within porphyrin-containing compound metabolism; chlorophyll biosynthesis. Its function is as follows. Catalyzes the 1,3-allylic rearrangement of the homoallylic substrate isopentenyl (IPP) to its highly electrophilic allylic isomer, dimethylallyl diphosphate (DMAPP). In Cannabis sativa (Hemp), this protein is Isopentenyl-diphosphate Delta-isomerase 1, chloroplastic.